The following is a 147-amino-acid chain: Nitric oxide reductase subunit C (147 aa).

The chain crosses the membrane as a helical; Signal-anchor span at residues 13–29; sequence VFYGGSLFFIAVFVGLT. Heme c-binding residues include Cys59, Cys62, and His63.

Heterodimer of cytochromes b (large subunit) and c (small subunit).

The protein resides in the cell membrane. Its function is as follows. Component of the anaerobic respiratory chain that transforms nitrate to dinitrogen (denitrification). In Cereibacter sphaeroides (strain ATCC 17025 / ATH 2.4.3) (Rhodobacter sphaeroides), this protein is Nitric oxide reductase subunit C (norC).